Here is an 89-residue protein sequence, read N- to C-terminus: Small ribosomal subunit protein uS15 (89 aa).

It belongs to the universal ribosomal protein uS15 family. In terms of assembly, part of the 30S ribosomal subunit. Forms a bridge to the 50S subunit in the 70S ribosome, contacting the 23S rRNA.

Functionally, one of the primary rRNA binding proteins, it binds directly to 16S rRNA where it helps nucleate assembly of the platform of the 30S subunit by binding and bridging several RNA helices of the 16S rRNA. Forms an intersubunit bridge (bridge B4) with the 23S rRNA of the 50S subunit in the ribosome. The protein is Small ribosomal subunit protein uS15 of Oenococcus oeni (strain ATCC BAA-331 / PSU-1).